The chain runs to 261 residues: MASVLEKTKSKKIVFPTKKELSEAMATYTANLSAKFCKERGYFTVVLSGGDLISWLSELLEPKYQESIEWSKWHIFWVDERVVPLDHEDSNYKLAFDGFLSKVPIPIANIYPIDKDCAALGDAKSAALLYEECLKRLVNRNIIRTYKSSGFPQFDLQLLGMGPDGHMASLFPGHYQIKEKANLVTYITDSPKPPPKRITFTLPVINCASYNLMAVCDEAQADAVAKVFNHNFDLPAAWLTADVEAIWFLDQAAASKIPKGL.

This sequence belongs to the glucosamine/galactosamine-6-phosphate isomerase family. 6-phosphogluconolactonase subfamily.

It localises to the cytoplasm. Its subcellular location is the cytosol. It carries out the reaction 6-phospho-D-glucono-1,5-lactone + H2O = 6-phospho-D-gluconate + H(+). It participates in carbohydrate degradation; pentose phosphate pathway; D-ribulose 5-phosphate from D-glucose 6-phosphate (oxidative stage): step 2/3. Its function is as follows. Catalyzes the hydrolysis of 6-phosphogluconolactone to 6-phosphogluconate. The polypeptide is Probable 6-phosphogluconolactonase 4 (Arabidopsis thaliana (Mouse-ear cress)).